The primary structure comprises 541 residues: Apolipoprotein N-acyltransferase (541 aa).

Transmembrane regions (helical) follow at residues 21-41, 54-74, 82-102, 116-136, 157-177, and 189-209; these read LSGFVSILGAACGYGFFWYSL, LFVSCFFWIFTIEGIHFSWML, LIYLVWLTLITILSVLFSGFS, FLWSLPGVWVAIEMLRFYGIF, FGGFLGWAGQSFAVIAVNMSF, and MLWVLTLLLPYTFGAIHYEYL. The region spanning 220–499 is the CN hydrolase domain; sequence LRVAVVQPAH…SGVLETSLPL (280 aa). The active-site Proton acceptor is E264. The active site involves K349. The Nucleophile role is filled by C404. Residues 512 to 532 traverse the membrane as a helical segment; the sequence is YPMILIAFCAVSYLGGGFLGY.

Belongs to the CN hydrolase family. Apolipoprotein N-acyltransferase subfamily.

It localises to the cell inner membrane. It carries out the reaction N-terminal S-1,2-diacyl-sn-glyceryl-L-cysteinyl-[lipoprotein] + a glycerophospholipid = N-acyl-S-1,2-diacyl-sn-glyceryl-L-cysteinyl-[lipoprotein] + a 2-acyl-sn-glycero-3-phospholipid + H(+). Its pathway is protein modification; lipoprotein biosynthesis (N-acyl transfer). Functionally, catalyzes the phospholipid dependent N-acylation of the N-terminal cysteine of apolipoprotein, the last step in lipoprotein maturation. The chain is Apolipoprotein N-acyltransferase from Chlamydia pneumoniae (Chlamydophila pneumoniae).